The chain runs to 471 residues: ATP synthase subunit beta (471 aa).

Position 154–161 (154–161 (GGAGVGKT)) interacts with ATP.

The protein belongs to the ATPase alpha/beta chains family. As to quaternary structure, F-type ATPases have 2 components, CF(1) - the catalytic core - and CF(0) - the membrane proton channel. CF(1) has five subunits: alpha(3), beta(3), gamma(1), delta(1), epsilon(1). CF(0) has three main subunits: a(1), b(2) and c(9-12). The alpha and beta chains form an alternating ring which encloses part of the gamma chain. CF(1) is attached to CF(0) by a central stalk formed by the gamma and epsilon chains, while a peripheral stalk is formed by the delta and b chains.

Its subcellular location is the cell membrane. It carries out the reaction ATP + H2O + 4 H(+)(in) = ADP + phosphate + 5 H(+)(out). Produces ATP from ADP in the presence of a proton gradient across the membrane. The catalytic sites are hosted primarily by the beta subunits. In Mesomycoplasma hyopneumoniae (strain 232) (Mycoplasma hyopneumoniae), this protein is ATP synthase subunit beta.